The primary structure comprises 695 residues: ATP-dependent zinc metalloprotease FTSH 2, chloroplastic (695 aa).

The transit peptide at 1–47 (MAASSACLVGNGLSVNTTTKQRLSKHFSGRQTSFSSVIRTSKVNVVK) directs the protein to the chloroplast. Residues 48-82 (ASLDGKKKQEGRRDFLKILLGNAGVGLVASGKANA) constitute a thylakoid transit peptide. Topologically, residues 83–167 (DEQGVSSSRM…AHNAQEDQGS (85 aa)) are lumenal, thylakoid. A helical membrane pass occupies residues 168–188 (VLFNLIGNLAFPALLIGGLFL). The Stromal portion of the chain corresponds to 189–695 (LSRRSGGGMG…PASAPTPAAV (507 aa)). Residue 267–274 (GPPGTGKT) coordinates ATP. His-488 is a binding site for Zn(2+). Glu-489 is a catalytic residue. Residues His-492 and Asp-566 each coordinate Zn(2+). Residues 673-695 (PPENRVPSSTTTTPASAPTPAAV) form a disordered region. The segment covering 679–695 (PSSTTTTPASAPTPAAV) has biased composition (low complexity).

The protein in the N-terminal section; belongs to the AAA ATPase family. In the C-terminal section; belongs to the peptidase M41 family. In terms of assembly, interacts with CHIP and FTSH5. Heterohexamers with FTSH1, FTSH5 and FTSH8. May also form homooligomers. The cofactor is Zn(2+). The FTSH2 precursor is ubiquitinated by CHIP in the cytoplasm. In terms of tissue distribution, expressed in cotyledons, cauline and rosette leaves, stems, sepals, flovers and siliques. Very low in roots.

It is found in the plastid. The protein localises to the chloroplast thylakoid membrane. In terms of biological role, part of a complex that function as an ATP-dependent zinc metallopeptidase. Involved in the thylakoid formation and in the removal of damaged D1 in the photosystem II, preventing cell death under high-intensity light conditions, but not involved in thermotolerance. The polypeptide is ATP-dependent zinc metalloprotease FTSH 2, chloroplastic (FTSH2) (Arabidopsis thaliana (Mouse-ear cress)).